Consider the following 156-residue polypeptide: Enhancer of split M1 protein (156 aa).

An N-terminal signal peptide occupies residues 1–19 (MMSQTLTLCCLGLVACVYG). Kazal-like domains lie at 23 to 81 (STND…AWCS) and 96 to 156 (KLEV…EEKC). 5 disulfide bridges follow: Cys-29–Cys-62, Cys-33–Cys-55, Cys-102–Cys-135, Cys-106–Cys-128, and Cys-114–Cys-156.

The protein is Enhancer of split M1 protein of Drosophila simulans (Fruit fly).